Consider the following 925-residue polypeptide: Serine/threonine-protein kinase PLK4 (925 aa).

Residues F12 to M265 form the Protein kinase domain. ATP contacts are provided by residues L18–V26 and K41. 2 positions are modified to N6-acetyllysine: K45 and K46. Catalysis depends on D136, which acts as the Proton acceptor. Disordered regions lie at residues H262–M283 and K328–S394. The span at S330–F341 shows a compositional bias: low complexity. Residues C342–N353 show a composition bias toward polar residues. The segment covering R359–H369 has biased composition (basic and acidic residues). Over residues R381–K391 the composition is skewed to polar residues. Position 400 is a phosphoserine (S400). A disordered region spans residues E517–E538. A compositionally biased stretch (basic and acidic residues) spans L525 to S536. Residues T547–K660 form the Cryptic POLO box 1 (CPB1) domain. One can recognise a Cryptic POLO box 2 (CPB2) domain in the interval T661–P774. S778 carries the post-translational modification Phosphoserine. Residues Q841–N919 form the POLO box domain.

Belongs to the protein kinase superfamily. Ser/Thr protein kinase family. CDC5/Polo subfamily. As to quaternary structure, homodimer. Interacts with CEP152 (via N-terminus). Interacts with CEP78; this interaction may be important for proper PLK4 localization to the centriole and PLK4-induced overduplication of centrioles. Interacts with CEP131. Interacts simultaneously with TENT5C and CEP192. Interacts with TENT5C; this interaction leads to the TENT5C recruitment in the centrosome. Interacts with CEP85; this interaction may be important in cell migration and centriole assembly. In terms of processing, ubiquitinated; leading to its degradation by the proteasome. Deubiquitinated by USP54; leading to PLK4 stabilization. Post-translationally, tyrosine-phosphorylated by TEC. Acetylation by KAT2A and KAT2B impairs kinase activity by shifting the kinase to an inactive conformation. As to expression, expressed in tissues associated with mitotic and meiotic cell division. Highly expressed in testis.

It is found in the cytoplasm. The protein localises to the cytoskeleton. Its subcellular location is the microtubule organizing center. The protein resides in the centrosome. It localises to the centriole. It is found in the nucleus. The protein localises to the nucleolus. Its subcellular location is the cleavage furrow. It carries out the reaction L-seryl-[protein] + ATP = O-phospho-L-seryl-[protein] + ADP + H(+). It catalyses the reaction L-threonyl-[protein] + ATP = O-phospho-L-threonyl-[protein] + ADP + H(+). Serine/threonine-protein kinase that plays a central role in centriole duplication. Able to trigger procentriole formation on the surface of the parental centriole cylinder, leading to the recruitment of centriole biogenesis proteins such as SASS6, CPAP, CCP110, CEP135 and gamma-tubulin. When overexpressed, it is able to induce centrosome amplification through the simultaneous generation of multiple procentrioles adjoining each parental centriole during S phase. Phosphorylates 'Ser-151' of FBXW5 during the G1/S transition, leading to inhibit FBXW5 ability to ubiquitinate SASS6. Its central role in centriole replication suggests a possible role in tumorigenesis, centrosome aberrations being frequently observed in tumors. Phosphorylates CDC25C and CHEK2. Also involved in deuterosome-mediated centriole amplification in multiciliated that can generate more than 100 centrioles. Also involved in trophoblast differentiation by phosphorylating HAND1, leading to disrupt the interaction between HAND1 and MDFIC and activate HAND1. Required for the recruitment of STIL to the centriole and for STIL-mediated centriole amplification. Phosphorylates CEP131 at 'Ser-78' and PCM1 at 'Ser-372' which is essential for proper organization and integrity of centriolar satellites. The protein is Serine/threonine-protein kinase PLK4 of Mus musculus (Mouse).